The following is a 363-amino-acid chain: NAD(P)H-quinone oxidoreductase subunit 1, chloroplastic (363 aa).

The next 7 helical transmembrane spans lie at 30 to 50, 104 to 124, 129 to 149, 248 to 268, 269 to 289, 300 to 320, and 336 to 356; these read FIPIFTPVLGITIGVLVIVWL, IAVISILVSYSVVPFGSHLVL, IGVFLWIAISSIAPIGLLMSG, YSGIKFGLFYVASYLNLLVSS, LFVTILYLGGWNISIPYIFVF, VFEPTIGMFITLAKTYLFLFI, and LLNLGWKFLLPISLGNLLLTT.

It belongs to the complex I subunit 1 family. As to quaternary structure, NDH is composed of at least 16 different subunits, 5 of which are encoded in the nucleus.

The protein localises to the plastid. It localises to the chloroplast thylakoid membrane. It catalyses the reaction a plastoquinone + NADH + (n+1) H(+)(in) = a plastoquinol + NAD(+) + n H(+)(out). It carries out the reaction a plastoquinone + NADPH + (n+1) H(+)(in) = a plastoquinol + NADP(+) + n H(+)(out). NDH shuttles electrons from NAD(P)H:plastoquinone, via FMN and iron-sulfur (Fe-S) centers, to quinones in the photosynthetic chain and possibly in a chloroplast respiratory chain. The immediate electron acceptor for the enzyme in this species is believed to be plastoquinone. Couples the redox reaction to proton translocation, and thus conserves the redox energy in a proton gradient. This Morus indica (Mulberry) protein is NAD(P)H-quinone oxidoreductase subunit 1, chloroplastic.